The following is a 217-amino-acid chain: Probable GTP-binding protein EngB (217 aa).

Residues 31–205 (VGVEIAFAGR…LAILDAWCHP (175 aa)) enclose the EngB-type G domain. Residues 39 to 46 (GRSNAGKS), 66 to 70 (GRTQL), 84 to 87 (DLPG), 151 to 154 (TKAD), and 184 to 186 (FSA) contribute to the GTP site. Mg(2+) contacts are provided by Ser46 and Thr68.

The protein belongs to the TRAFAC class TrmE-Era-EngA-EngB-Septin-like GTPase superfamily. EngB GTPase family. Requires Mg(2+) as cofactor.

Its function is as follows. Necessary for normal cell division and for the maintenance of normal septation. The protein is Probable GTP-binding protein EngB of Shewanella amazonensis (strain ATCC BAA-1098 / SB2B).